The chain runs to 263 residues: Shikimate dehydrogenase (NADP(+)) (263 aa).

Residues 16–18 and threonine 65 contribute to the shikimate site; that span reads SKS. Catalysis depends on lysine 69, which acts as the Proton acceptor. Shikimate-binding residues include asparagine 90 and aspartate 105. NADP(+) contacts are provided by residues 125-129 and leucine 208; that span reads GSGGS. Tyrosine 210 contacts shikimate. Residue glycine 230 coordinates NADP(+).

It belongs to the shikimate dehydrogenase family. In terms of assembly, homodimer.

The catalysed reaction is shikimate + NADP(+) = 3-dehydroshikimate + NADPH + H(+). Its pathway is metabolic intermediate biosynthesis; chorismate biosynthesis; chorismate from D-erythrose 4-phosphate and phosphoenolpyruvate: step 4/7. Inhibited by curcumin, 3-(2-naphthyloxy)-4-oxo-2-(trifluoromethyl)-4H-chromen-7-yl 3-chlorobenzoate, butyl 2-{[3-(2-naphthyloxy)-4-oxo-2-(trifluoromethyl)-4H-chromen-7-yl]oxy}propanoate, 2-({2-[(2-{[2-(2,3-dimethylanilino)-2-oxoethyl]sulfanyl}-1,3-benzothiazol-6-yl)amino]-2-oxoethyl}sulfanyl)-N-(2-naphthyl)acetamide, and maesaquinone diacetate. Involved in the biosynthesis of the chorismate, which leads to the biosynthesis of aromatic amino acids. Catalyzes the reversible NADPH linked reduction of 3-dehydroshikimate (DHSA) to yield shikimate (SA). It can also use NAD to oxidize shikimate. In Helicobacter pylori (Campylobacter pylori), this protein is Shikimate dehydrogenase (NADP(+)).